The following is a 430-amino-acid chain: Carbamoyl phosphate synthase arginine-specific small chain (430 aa).

The transit peptide at 1–9 (MLSATKRYL) directs the protein to the mitochondrion. The Glutamine amidotransferase type-1 domain maps to 219–407 (HIAVLDCGAK…FDNINVYKKS (189 aa)). Catalysis depends on Cys-296, which acts as the Nucleophile. Residues His-380 and Glu-382 contribute to the active site.

Belongs to the CarA family. In terms of assembly, heterodimer composed of 2 chains; the small (or glutamine) chain promotes the hydrolysis of glutamine to ammonia, which is used by the large (or ammonia) chain to synthesize carbamoyl phosphate.

Its subcellular location is the mitochondrion matrix. It carries out the reaction hydrogencarbonate + L-glutamine + 2 ATP + H2O = carbamoyl phosphate + L-glutamate + 2 ADP + phosphate + 2 H(+). The catalysed reaction is L-glutamine + H2O = L-glutamate + NH4(+). Its pathway is amino-acid biosynthesis; L-arginine biosynthesis; carbamoyl phosphate from bicarbonate: step 1/1. Its function is as follows. Small subunit of the arginine-specific carbamoyl phosphate synthase (CPSase). CPSase catalyzes the formation of carbamoyl phosphate from the ammonia moiety of glutamine, carbonate, and phosphate donated by ATP, the first step of the arginine biosynthetic pathway. The small subunit (glutamine amidotransferase) binds and cleaves glutamine to supply the large subunit with the substrate ammonia. The sequence is that of Carbamoyl phosphate synthase arginine-specific small chain (CPA1) from Candida albicans (strain SC5314 / ATCC MYA-2876) (Yeast).